Here is a 163-residue protein sequence, read N- to C-terminus: Protein NAG1 (163 aa).

A helical transmembrane segment spans residues 76-96 (ACFSVRIVLPLSLTISISALM).

Its subcellular location is the membrane. Functionally, involved in yeast cell wall biogenesis. This is Protein NAG1 (NAG1) from Saccharomyces cerevisiae (strain ATCC 204508 / S288c) (Baker's yeast).